The chain runs to 318 residues: Probable plastid-lipid-associated protein 1, chloroplastic (318 aa).

A chloroplast-targeting transit peptide spans 1–55 (MATVPLFTQFPCKTLNPSSSNTKHQSKSPILLPINSINRRSEIGVSVHRPDFKIR). Residue threonine 57 is modified to Phosphothreonine.

The protein belongs to the PAP/fibrillin family. As to quaternary structure, interacts (via N-terminus) with ABI2. Expressed in flower buds. Detected in tapetal cells, endothecium and connective in anthers and in subepidermal cells in filaments.

It is found in the plastid. Its subcellular location is the chloroplast. The protein resides in the plastoglobule. The protein localises to the chloroplast thylakoid. Its function is as follows. Probably involved in light/cold stress-related jasmonate (JA) biosynthesis. Contributes to the protection of photosystem II (PSII) against light stress. This Arabidopsis thaliana (Mouse-ear cress) protein is Probable plastid-lipid-associated protein 1, chloroplastic (PAP1).